A 366-amino-acid polypeptide reads, in one-letter code: Quinolinate synthase (366 aa).

His-44 and Ser-61 together coordinate iminosuccinate. Cys-108 contacts [4Fe-4S] cluster. Iminosuccinate-binding positions include 139 to 141 (YVN) and Ser-160. Cys-228 is a binding site for [4Fe-4S] cluster. Iminosuccinate is bound by residues 254–256 (HPE) and Thr-271. A [4Fe-4S] cluster-binding site is contributed by Cys-318.

This sequence belongs to the quinolinate synthase family. Type 3 subfamily. [4Fe-4S] cluster is required as a cofactor.

Its subcellular location is the cytoplasm. It carries out the reaction iminosuccinate + dihydroxyacetone phosphate = quinolinate + phosphate + 2 H2O + H(+). The protein operates within cofactor biosynthesis; NAD(+) biosynthesis; quinolinate from iminoaspartate: step 1/1. Its function is as follows. Catalyzes the condensation of iminoaspartate with dihydroxyacetone phosphate to form quinolinate. The sequence is that of Quinolinate synthase from Staphylococcus carnosus (strain TM300).